Consider the following 466-residue polypeptide: 3-isopropylmalate dehydratase large subunit (466 aa).

Residues Cys-347, Cys-407, and Cys-410 each contribute to the [4Fe-4S] cluster site.

It belongs to the aconitase/IPM isomerase family. LeuC type 1 subfamily. In terms of assembly, heterodimer of LeuC and LeuD. [4Fe-4S] cluster serves as cofactor.

The enzyme catalyses (2R,3S)-3-isopropylmalate = (2S)-2-isopropylmalate. It functions in the pathway amino-acid biosynthesis; L-leucine biosynthesis; L-leucine from 3-methyl-2-oxobutanoate: step 2/4. Functionally, catalyzes the isomerization between 2-isopropylmalate and 3-isopropylmalate, via the formation of 2-isopropylmaleate. In Buchnera aphidicola subsp. Thelaxes suberi, this protein is 3-isopropylmalate dehydratase large subunit.